We begin with the raw amino-acid sequence, 88 residues long: Cell division topological specificity factor (88 aa).

The protein belongs to the MinE family.

Functionally, prevents the cell division inhibition by proteins MinC and MinD at internal division sites while permitting inhibition at polar sites. This ensures cell division at the proper site by restricting the formation of a division septum at the midpoint of the long axis of the cell. The chain is Cell division topological specificity factor from Aeromonas hydrophila subsp. hydrophila (strain ATCC 7966 / DSM 30187 / BCRC 13018 / CCUG 14551 / JCM 1027 / KCTC 2358 / NCIMB 9240 / NCTC 8049).